A 495-amino-acid chain; its full sequence is Putative aldehyde dehydrogenase AldA (495 aa).

212–218 lines the NAD(+) pocket; it reads GKGSESG. Catalysis depends on residues Glu256 and Cys290.

It belongs to the aldehyde dehydrogenase family.

The catalysed reaction is an aldehyde + NAD(+) + H2O = a carboxylate + NADH + 2 H(+). The sequence is that of Putative aldehyde dehydrogenase AldA (aldA) from Staphylococcus aureus (strain bovine RF122 / ET3-1).